Consider the following 392-residue polypeptide: NAC domain-containing protein 58 (392 aa).

In terms of domain architecture, NAC spans 9 to 173 (LPPGFRFHPT…DWVLCRIYKK (165 aa)). Residues 317-345 (STSAGAVVEPPAVTGKRKRSSDGGEPTIQ) form a disordered region.

As to expression, expressed in leaves, nodes, internodes and mature seeds. Highly expressed in roots. Expressed in leaf sheaths, flag leaves and inflorescences. Expressed in primary and lateral roots, particularly in the vascular tissues. Expressed in the primary phloem of the culm and leaf sheaths. Expressed principally in the primary phloem and in the peripheral zone of the leaf vascular bundles. Expressed in the floral tissues.

The protein resides in the nucleus. In terms of biological role, transcription factor that acts as a positive regulator of the jasmonate (JA) pathway to mediate leaf senescence. May directly regulate LOX2, AOC, AOS2, AOC1 and OPR7, which are genes involved in the biosynthesis of JA. Regulates positively leaf senescence by directly targeting senescence-associated genes (SAGs) related to chlorophyll degradation, nutrient transport and other genes associated with abscisic acid-induced leaf senescence. Transcription activator that plays a role in mediating abiotic stress responses through the abscisic acid (ABA) pathway. Possesses transcriptional activator activity in yeast. The polypeptide is NAC domain-containing protein 58 (Oryza sativa subsp. japonica (Rice)).